A 191-amino-acid polypeptide reads, in one-letter code: Ribonuclease HII (191 aa).

One can recognise an RNase H type-2 domain in the interval 16 to 191 (INLIGIDEAG…KLHRKSFKLL (176 aa)). The a divalent metal cation site is built by Asp22, Glu23, and Asp110.

The protein belongs to the RNase HII family. Requires Mn(2+) as cofactor. Mg(2+) serves as cofactor.

The protein localises to the cytoplasm. The enzyme catalyses Endonucleolytic cleavage to 5'-phosphomonoester.. In terms of biological role, endonuclease that specifically degrades the RNA of RNA-DNA hybrids. The protein is Ribonuclease HII (rnhB) of Campylobacter jejuni subsp. jejuni serotype O:2 (strain ATCC 700819 / NCTC 11168).